We begin with the raw amino-acid sequence, 388 residues long: Carbohydrate sulfotransferase 4 (388 aa).

At 1 to 7 (MMLLKKG) the chain is on the cytoplasmic side. The chain crosses the membrane as a helical; Signal-anchor for type II membrane protein span at residues 8-28 (RLLMFLGSQVIVVALFIHMSV). Residues 29–388 (HRHLSQREES…HILGQVFREG (360 aa)) are Lumenal-facing. 3'-phosphoadenylyl sulfate-binding positions include 50-56 (WRSGSSF) and 204-212 (RDPRAVFRS). 3 N-linked (GlcNAc...) asparagine glycosylation sites follow: N307, N328, and N369.

Belongs to the sulfotransferase 1 family. Gal/GlcNAc/GalNAc subfamily. As to quaternary structure, monomer. In terms of tissue distribution, specifically expressed in high endothelial venules (HEV) of peripheral lymph nodes.

The protein localises to the golgi apparatus membrane. It carries out the reaction 3-O-{N-acetyl-beta-D-glucosaminyl-(1-&gt;3)-beta-D-galactosyl-(1-&gt;3)-N-acetyl-alpha-D-galactosaminyl}-L-threonyl-[protein] + 3'-phosphoadenylyl sulfate = 3-O-{6-O-sulfo-N-acetyl-beta-D-glucosaminyl-(1-&gt;3)-beta-D-galactosyl-(1-&gt;3)-N-acetyl-alpha-D-galactosaminyl}-L-threonyl-[protein] + adenosine 3',5'-bisphosphate + H(+). The catalysed reaction is 3-O-{N-acetyl-beta-D-glucosaminyl-(1-&gt;3)-beta-D-galactosyl-(1-&gt;3)-N-acetyl-alpha-D-galactosaminyl}-L-seryl-[protein] + 3'-phosphoadenylyl sulfate = 3-O-{6-O-sulfo-N-acetyl-beta-D-glucosaminyl-(1-&gt;3)-beta-D-galactosyl-(1-&gt;3)-N-acetyl-alpha-D-galactosaminyl}-L-seryl-[protein] + adenosine 3',5'-bisphosphate + H(+). The enzyme catalyses a 3-O-{beta-D-galactosyl-(1-&gt;3)-[N-acetyl-beta-D-glucosaminyl-(1-&gt;6)]-N-acetyl-alpha-D-galactosaminyl}-L-threonyl-[protein] + 3'-phosphoadenylyl sulfate = 3-O-{beta-D-galactosyl-(1-&gt;3)-[6-O-sulfo-N-acetyl-beta-D-glucosaminyl-(1-&gt;6)]-N-acetyl-alpha-D-galactosaminyl}-L-threonyl-[protein] + adenosine 3',5'-bisphosphate + H(+). It catalyses the reaction 3-O-{beta-D-galactosyl-(1-&gt;3)-[N-acetyl-beta-D-glucosaminyl-(1-&gt;6)]-N-acetyl-alpha-D-galactosaminyl}-L-seryl-[protein] + 3'-phosphoadenylyl sulfate = 3-O-{beta-D-galactosyl-(1-&gt;3)-[6-O-sulfo-N-acetyl-beta-D-glucosaminyl-(1-&gt;6)]-N-acetyl-alpha-D-galactosaminyl}-L-seryl-[protein] + adenosine 3',5'-bisphosphate + H(+). It participates in protein modification; carbohydrate sulfation. Functionally, sulfotransferase involved in SELL/L-selectin ligand biosynthesis pathway. Catalyzes the transfer of the sulfate group from 3'-phospho-5'-adenylyl sulfate (PAPS) onto the hydroxyl group at C-6 position of the non-reducing N-acetylglucosamine (GlcNAc) residue within O-linked mucin-type glycans. Contributes to generate sialyl 6-sulfo Lewis X determinant (also known as MECA-79 epitope) for SELL recognition, a prerequisite for continuous lymphocyte homing into peripheral lymph nodes and antigen immune surveillance. Transfers the sulfate group primarily on core 2 GlcNAcbeta1-6(Galbeta1-3)GalNAcalphaSer/Thr and extended core 1 GlcNAcbeta1-3Galbeta1-3GalNAcalphaSer/Thr based O-linked glycans on CD34 and GLYCAM1 peripheral node addressins (PNAds) expressed on the lumenal side of high endothelial venules (HEVs). The recognition of PNAds by SELL initiates a multistep process comprising tethering and rolling of blood lymphocytes on HEVs against the blood flow, followed by chemokine signaling, integrin-mediated lymphocyte adhesion onto endothelial cells and lymphocyte transendothelial migration. Modulates rolling velocity and differential T and B lymphocyte recruitment into peripheral lymph nodes, with a major role in B lymphocyte homing. Might be redundant in sulfation of MADCAM1 and lymphocyte trafficking to mesenteric lymph nodes. Can also sulfonate core 3 GlcNAcbeta1-3GalNAc-R based glycans as well as GlcNAcbeta1-3Galbeta1-Glc, GlcNAcbeta1-6ManOMe and GlcNAcbeta1-2Man oligosaccharides, which might be ectopically expressed during tumorigenesis. The protein is Carbohydrate sulfotransferase 4 (Chst4) of Mus musculus (Mouse).